Reading from the N-terminus, the 176-residue chain is Deoxyuridine 5'-triphosphate nucleotidohydrolase (176 aa).

Substrate contacts are provided by residues 67–69 (RSG), asparagine 80, 84–86 (TVD), and lysine 94. The tract at residues 141–176 (GGFGSTGGHASVDGAEGGITHGGNSYASVVSDREGQ) is disordered.

This sequence belongs to the dUTPase family. It depends on Mg(2+) as a cofactor.

It carries out the reaction dUTP + H2O = dUMP + diphosphate + H(+). The protein operates within pyrimidine metabolism; dUMP biosynthesis; dUMP from dCTP (dUTP route): step 2/2. Its function is as follows. This enzyme is involved in nucleotide metabolism: it produces dUMP, the immediate precursor of thymidine nucleotides and it decreases the intracellular concentration of dUTP so that uracil cannot be incorporated into DNA. This Streptomyces griseus subsp. griseus (strain JCM 4626 / CBS 651.72 / NBRC 13350 / KCC S-0626 / ISP 5235) protein is Deoxyuridine 5'-triphosphate nucleotidohydrolase.